Here is a 422-residue protein sequence, read N- to C-terminus: Tyrosine--tRNA ligase (422 aa).

Tyrosine 36 provides a ligand contact to L-tyrosine. A 'HIGH' region motif is present at residues 41–50; sequence PTADSLHIGH. 2 residues coordinate L-tyrosine: tyrosine 175 and glutamine 179. Residues 235–239 carry the 'KMSKS' region motif; sequence KFGKT. Lysine 238 contributes to the ATP binding site. The 58-residue stretch at 354-411 folds into the S4 RNA-binding domain; the sequence is TSLQEALTKSKLATSRSQARYFIKSNAITINAHKQSKIEYIFQDSDRIYNLYTLLKRG.

The protein belongs to the class-I aminoacyl-tRNA synthetase family. TyrS type 1 subfamily. In terms of assembly, homodimer.

The protein localises to the cytoplasm. It catalyses the reaction tRNA(Tyr) + L-tyrosine + ATP = L-tyrosyl-tRNA(Tyr) + AMP + diphosphate + H(+). In terms of biological role, catalyzes the attachment of tyrosine to tRNA(Tyr) in a two-step reaction: tyrosine is first activated by ATP to form Tyr-AMP and then transferred to the acceptor end of tRNA(Tyr). The polypeptide is Tyrosine--tRNA ligase (Blochmanniella floridana).